Consider the following 330-residue polypeptide: HTH-type transcriptional regulator GanR (330 aa).

Positions alanine 2–lysine 57 constitute an HTH lacI-type domain. A DNA-binding region (H-T-H motif) is located at residues isoleucine 4–asparagine 23.

In terms of biological role, negatively regulates the expression of the ganSPQAB operon. Inhibits transcription of the operon by binding to an operator in the promoter region. In the presence of galactobiose, GanR dissociates from the promoter, resulting in the expression of the gan operon. The protein is HTH-type transcriptional regulator GanR of Bacillus subtilis (strain 168).